Reading from the N-terminus, the 787-residue chain is Protein smoothened (787 aa).

Positions 1–27 (MAAARPARGPELPLLGLLLLLLLGDPG) are cleaved as a signal peptide. Topologically, residues 28–233 (RGAASSGNAT…EAEHQDMHSY (206 aa)) are extracellular. The tract at residues 30–60 (AASSGNATGPGPRSAGGSARRSAAVTGPPPP) is disordered. A glycan (N-linked (GlcNAc...) asparagine) is linked at asparagine 35. Low complexity predominate over residues 38 to 53 (GPGPRSAGGSARRSAA). 5 disulfides stabilise this stretch: cysteine 64–cysteine 178, cysteine 70–cysteine 134, cysteine 78–cysteine 127, cysteine 118–cysteine 154, and cysteine 147–cysteine 169. The FZ domain occupies 65 to 181 (GRAAPCEPLR…DRFPEGCTNE (117 aa)). Aspartate 95 contributes to the cholesterol binding site. Asparagine 188 carries N-linked (GlcNAc...) asparagine glycosylation. Disulfide bonds link cysteine 193–cysteine 213 and cysteine 217–cysteine 295. The helical transmembrane segment at 234–254 (IAAFGAVTGLCTLFTLATFVA) threads the bilayer. Topologically, residues 255–262 (DWRNSNRY) are cytoplasmic. A helical transmembrane segment spans residues 263 to 283 (PAVILFYVNACFFVGSIGWLA). The Extracellular portion of the chain corresponds to 284 to 314 (QFMDGARREIVCRADGTMRLGEPTSNETLSC). N-linked (GlcNAc...) asparagine glycosylation occurs at asparagine 309. Cysteine 314 and cysteine 390 form a disulfide bridge. A helical membrane pass occupies residues 315-335 (VIIFVIVYYALMAGVVWFVVL). Residues 336–358 (TYAWHTSFKALGTTYQPLSGKTS) are Cytoplasmic-facing. The chain crosses the membrane as a helical span at residues 359–379 (YFHLLTWSLPFVLTVAILAVA). Residues 380 to 402 (QVDGDSVSGICFVGYKNYRYRAG) lie on the Extracellular side of the membrane. Tyrosine 394 contacts cholesterol. Residues 403–423 (FVLAPIGLVLIVGGYFLIRGV) form a helical membrane-spanning segment. The Cytoplasmic segment spans residues 424–451 (MTLFSIKSNHPGLLSEKAASKINETMLR). The chain crosses the membrane as a helical span at residues 452-472 (LGIFGFLAFGFVLITFSCHFY). The Extracellular segment spans residues 473 to 524 (DFFNQAEWERSFRDYVLCQANVTIGLPTKQPIPDCEIKNRPSLLVEKINLFA). A disulfide bridge connects residues cysteine 490 and cysteine 507. Residues 525-545 (MFGTGIAMSTWVWTKATLLIW) traverse the membrane as a helical segment. The segment at 538-569 (TKATLLIWRRTWCRLTGQSDDEPKRIKKSKMI) is interaction with BBS5 and BBS7. The Cytoplasmic segment spans residues 546–787 (RRTWCRLTGQ…TELMDADSDF (242 aa)). 3 positions are modified to phosphoserine: serine 556, serine 574, and serine 590. Positions 570-653 (AKAFSKRHEL…TPVPPEEQAN (84 aa)) are required for interaction with PRKACA. The segment at 581–593 (QNPGQELSFSMHT) is interaction with DLG5. At threonine 593 the chain carries Phosphothreonine. Serine 595 and serine 638 each carry phosphoserine. 2 positions are modified to phosphothreonine: threonine 640 and threonine 644. Serine 662 carries the phosphoserine modification. A disordered region spans residues 667–704 (KRLGRKKKRRKRKKEVCPLAPPPELHPPAPAPSTIPRL). Basic residues predominate over residues 668 to 680 (RLGRKKKRRKRKK). Pro residues predominate over residues 685–699 (LAPPPELHPPAPAPS).

It belongs to the G-protein coupled receptor Fz/Smo family. As to quaternary structure, homodimer. Interacts (via C-terminus) with protein kinase A catalytic subunit PRKACA; interacts with free PRKACA subunits and the interaction leads to sequestration of PRKACA at the membrane, preventing PRKACA-mediated phosphorylation of GLI transcription factors. Interacts with ARRB2. Interacts with KIF7. Interacts with BBS5 and BBS7; the interactions are indicative for the association of SMO with the BBsome complex to facilitate ciliary localization of SMO. Interacts with DLG5 and SDCBP. Interacts with GAS8/DRC4. In terms of processing, phosphorylation by GRK kinases is required for interaction with protein kinase A catalytic subunit PRKACA.

Its subcellular location is the cell membrane. It is found in the cell projection. The protein localises to the cilium. Its function is as follows. G protein-coupled receptor which associates with the patched protein (PTCH) to transduce hedgehog protein signaling. Binding of sonic hedgehog (SHH) to its receptor patched prevents inhibition of smoothened (SMO) by patched. When active, SMO binds to and sequesters protein kinase A catalytic subunit PRKACA at the cell membrane, preventing PRKACA-mediated phosphorylation of GLI transcription factors which releases the GLI proteins from PRKACA-mediated inhibition and allows for transcriptional activation of hedgehog pathway target genes. Required for the accumulation of KIF7, GLI2 and GLI3 in the cilia. Interacts with DLG5 at the ciliary base to induce the accumulation of KIF7 and GLI2 at the ciliary tip for GLI2 activation. This chain is Protein smoothened (SMO), found in Homo sapiens (Human).